A 135-amino-acid chain; its full sequence is NADPH-dependent 7-cyano-7-deazaguanine reductase (135 aa).

Residue Cys-48 is the Thioimide intermediate of the active site. The Proton donor role is filled by Asp-55. Residues 70-72 (IEL) and 89-90 (HE) contribute to the substrate site.

It belongs to the GTP cyclohydrolase I family. QueF type 1 subfamily.

It is found in the cytoplasm. The catalysed reaction is 7-aminomethyl-7-carbaguanine + 2 NADP(+) = 7-cyano-7-deazaguanine + 2 NADPH + 3 H(+). The protein operates within tRNA modification; tRNA-queuosine biosynthesis. Its function is as follows. Catalyzes the NADPH-dependent reduction of 7-cyano-7-deazaguanine (preQ0) to 7-aminomethyl-7-deazaguanine (preQ1). The chain is NADPH-dependent 7-cyano-7-deazaguanine reductase from Prochlorococcus marinus (strain MIT 9303).